The sequence spans 305 residues: ATP-dependent Clp protease proteolytic subunit-related protein 4, chloroplastic (305 aa).

A chloroplast-targeting transit peptide spans 1–68 (MEVAAATATS…SSDLCGAKLR (68 aa)).

This sequence belongs to the peptidase S14 family. As to quaternary structure, component of the chloroplastic Clp protease core complex which consist of at least 16 proteins: CLPP4 (3 copies), CLPP5 (3 copies), CLPR4 (2 copies), ClpP1 (1 copy), CLPP6 (1 copy), CLPR2 (1 copy), CLPT1 (1 copy), CLPT2 (1 copy) and 3 copies of CLPP3 and/or CLPR1 and/or CLPR3. The core complex is organized in two heptameric rings, one containing CLPP3,4,5,6 in a 1:2:3:1 ratio and the other CLPP1 and CLPR1,2,3,4 in a 3:1:1:1:1 ratio.

The protein localises to the plastid. Its subcellular location is the chloroplast. Functionally, involved in plastid protein homeostasis. This chain is ATP-dependent Clp protease proteolytic subunit-related protein 4, chloroplastic, found in Arabidopsis thaliana (Mouse-ear cress).